The sequence spans 2316 residues: Receptor-type tyrosine-protein phosphatase zeta (2316 aa).

Residues 1-24 form the signal peptide; that stretch reads MRILQSFLACVQLLCVCRLDWAYG. Residues 25–1637 are Extracellular-facing; that stretch reads YYRQQRKLVE…LAEGLESEKK (1613 aa). Residues 36–300 enclose the Alpha-carbonic anhydrase domain; sequence IGWSYTGALN…KFSRQVFSSY (265 aa). 2 disulfide bridges follow: Cys56-Cys240 and Cys133-Cys264. 7 N-linked (GlcNAc...) asparagine glycosylation sites follow: Asn105, Asn134, Asn223, Asn232, Asn324, Asn381, and Asn497. The Fibronectin type-III domain maps to 314 to 413; it reads EPENVQADPE…LIVDMPTEDA (100 aa). Disordered regions lie at residues 433-499 and 518-537; these read YGKG…LNTS and LPSQ…TSAS. N-linked (GlcNAc...) asparagine glycosylation is present at Asn552. A phosphoserine mark is found at Ser572 and Ser576. 2 disordered regions span residues 586-624 and 636-720; these read KLDS…TPEA and RNAL…EMPH. Low complexity predominate over residues 592–602; the sequence is DDSSGSSPASS. Residue Ser595 is glycosylated (O-linked (Xyl...) (chondroitin sulfate) serine). Residues 603 to 621 show a composition bias toward polar residues; sequence TVPFSTDNLSHGYTSSSDT. The N-linked (GlcNAc...) asparagine glycan is linked to Asn610. Ser645 carries the phosphoserine; alternate modification. The O-linked (Xyl...) (chondroitin sulfate) serine; alternate glycan is linked to Ser645. Residue Ser647 is modified to Phosphoserine. Residues 666–675 show a composition bias toward polar residues; that stretch reads TDLTTQSETG. Asn685 carries an N-linked (GlcNAc...) asparagine glycan. Polar residues predominate over residues 699 to 711; the sequence is ETFSPDATASRGP. N-linked (GlcNAc...) asparagine glycosylation occurs at Asn786. Ser1005 is a glycosylation site (O-linked (Xyl...) (chondroitin sulfate) serine). N-linked (GlcNAc...) asparagine glycans are attached at residues Asn1025 and Asn1058. 4 disordered regions span residues 1141–1172, 1204–1228, 1401–1521, and 1545–1622; these read QASG…SHPS, KTAL…SSSS, LLPS…DGRE, and TSDE…NSSH. The span at 1152-1172 shows a compositional bias: polar residues; that stretch reads LSTNSEPALSDTASSEVSHPS. Positions 1401 to 1413 are enriched in polar residues; it reads LLPSKATSKPTHS. Positions 1425–1439 are enriched in acidic residues; sequence EDGDDYDDDDYDDID. Residue Asn1463 is glycosylated (N-linked (GlcNAc...) asparagine). The segment covering 1464-1478 has biased composition (polar residues); sequence DSDTQESSLVDQSDP. Residues Ser1550 and Ser1552 are each glycosylated (O-linked (Xyl...) (chondroitin sulfate) serine). 2 stretches are compositionally biased toward polar residues: residues 1555 to 1569 and 1595 to 1609; these read GTSD…STDF and PRSS…HSGV. N-linked (GlcNAc...) asparagine glycosylation is present at Asn1563. Low complexity predominate over residues 1610–1621; that stretch reads SNSSEAEASNSS. 2 N-linked (GlcNAc...) asparagine glycosylation sites follow: Asn1611 and Asn1619. A helical transmembrane segment spans residues 1638-1663; it reads AVIPLVIVSALTFICLVVLVGILIYW. Over 1664–2316 the chain is Cytoplasmic; sequence RKCFQTAHFY…NIAESLESLV (653 aa). Phosphothreonine is present on residues Thr1685 and Thr1688. 2 Tyrosine-protein phosphatase domains span residues 1718 to 1993 and 2024 to 2283; these read FTEE…LVEA and LEKQ…VLSL. Substrate contacts are provided by residues Asp1902, 1934 to 1940, and Gln1978; that span reads CSAGVGR. Cys1934 functions as the Phosphocysteine intermediate in the catalytic mechanism. Ser2056 bears the Phosphoserine mark.

The protein belongs to the protein-tyrosine phosphatase family. Receptor class 5 subfamily. As to quaternary structure, interacts with tenascin. Interacts with N-CAM and NG-CAM. The carbonic-anhydrase like domain interacts with CNTN1 (contactin). Interacts with PTN. Interaction with PTN promotes formation of homooligomers; oligomerization impairs phosphatase activity. Interacts (via chondroitin sulfate chains) with MDK (via C-terminal); this interaction is inhibited by PTN; this interaction promotes neuronal migration. Nervous tissue specific.

Its subcellular location is the cell membrane. The protein localises to the secreted. The catalysed reaction is O-phospho-L-tyrosyl-[protein] + H2O = L-tyrosyl-[protein] + phosphate. Functionally, protein tyrosine phosphatase that negatively regulates oligodendrocyte precursor proliferation in the embryonic spinal cord. Required for normal differentiation of the precursor cells into mature, fully myelinating oligodendrocytes. May play a role in protecting oligondendrocytes against apoptosis. May play a role in the establishment of contextual memory, probably via the dephosphorylation of proteins that are part of important signaling cascades. Isoform 3 (phosphacan), previously designated 3F8 chondroitin sulfate proteoglycan or 3H1 keratan sulfate proteoglycan depending on the glycosylation status, is a soluble nervous tissue-specific proteoglycan. It is synthesized by glia and binds to neurons and to the neural cell adhesion molecules tenascin, N-CAM or NG-CAM but not to laminin and fibronectin. Phosphacan acts as a potent inhibitor of cell adhesion and neurite outgrowth. In Rattus norvegicus (Rat), this protein is Receptor-type tyrosine-protein phosphatase zeta (Ptprz1).